The sequence spans 243 residues: Pyridoxine 5'-phosphate synthase (243 aa).

Asparagine 9 contributes to the 3-amino-2-oxopropyl phosphate binding site. 11-12 (DH) lines the 1-deoxy-D-xylulose 5-phosphate pocket. A 3-amino-2-oxopropyl phosphate-binding site is contributed by arginine 20. The active-site Proton acceptor is histidine 45. Positions 47 and 52 each coordinate 1-deoxy-D-xylulose 5-phosphate. The active-site Proton acceptor is the glutamate 72. Threonine 102 is a 1-deoxy-D-xylulose 5-phosphate binding site. The Proton donor role is filled by histidine 193. Residues glycine 194 and 215–216 (GH) each bind 3-amino-2-oxopropyl phosphate.

It belongs to the PNP synthase family. As to quaternary structure, homooctamer; tetramer of dimers.

It is found in the cytoplasm. It catalyses the reaction 3-amino-2-oxopropyl phosphate + 1-deoxy-D-xylulose 5-phosphate = pyridoxine 5'-phosphate + phosphate + 2 H2O + H(+). The protein operates within cofactor biosynthesis; pyridoxine 5'-phosphate biosynthesis; pyridoxine 5'-phosphate from D-erythrose 4-phosphate: step 5/5. Functionally, catalyzes the complicated ring closure reaction between the two acyclic compounds 1-deoxy-D-xylulose-5-phosphate (DXP) and 3-amino-2-oxopropyl phosphate (1-amino-acetone-3-phosphate or AAP) to form pyridoxine 5'-phosphate (PNP) and inorganic phosphate. This is Pyridoxine 5'-phosphate synthase from Escherichia coli O6:H1 (strain CFT073 / ATCC 700928 / UPEC).